Reading from the N-terminus, the 137-residue chain is Small integral membrane protein 9 (137 aa).

The N-terminal stretch at 1 to 23 (MKPLKLFCIGLLLCPLVCLLLET) is a signal peptide. The Extracellular portion of the chain corresponds to 24-84 (APPPSALLTL…NHLSDFFKSS (61 aa)). The chain crosses the membrane as a helical span at residues 85–105 (IPPAAIFALFVTTAIMRAAIV). At 106 to 137 (NKRLEEPHRQWTIDQRSSLEMQNMNLIKLFGG) the chain is on the cytoplasmic side.

The protein localises to the cell membrane. This Mus musculus (Mouse) protein is Small integral membrane protein 9 (Smim9).